The sequence spans 303 residues: ATP-dependent (S)-NAD(P)H-hydrate dehydratase (303 aa).

Residues 12–299 enclose the YjeF C-terminal domain; sequence QQQLVCSVIP…AEVRTAFSML (288 aa). (6S)-NADPHX contacts are provided by residues G106 and 158–164; that span reads NAVELDR. Residues 194–198 and 213–222 each bind ATP; these read KGSED and GSPRRCGGQG. Residue D223 participates in (6S)-NADPHX binding.

This sequence belongs to the NnrD/CARKD family. Mg(2+) serves as cofactor.

It catalyses the reaction (6S)-NADHX + ATP = ADP + phosphate + NADH + H(+). The catalysed reaction is (6S)-NADPHX + ATP = ADP + phosphate + NADPH + H(+). Catalyzes the dehydration of the S-form of NAD(P)HX at the expense of ATP, which is converted to ADP. Together with NAD(P)HX epimerase, which catalyzes the epimerization of the S- and R-forms, the enzyme allows the repair of both epimers of NAD(P)HX, a damaged form of NAD(P)H that is a result of enzymatic or heat-dependent hydration. This Ixodes scapularis (Black-legged tick) protein is ATP-dependent (S)-NAD(P)H-hydrate dehydratase.